The following is a 920-amino-acid chain: Nitrate reductase [NADH] (920 aa).

A disordered region spans residues Met1–Ala69. The segment covering Asp60–Ala69 has biased composition (acidic residues). Cys185 serves as a coordination point for Mo-molybdopterin. Residues Ser534 to Ile609 enclose the Cytochrome b5 heme-binding domain. Heme contacts are provided by His569 and His592. Positions Arg663 to Met775 constitute an FAD-binding FR-type domain. FAD is bound by residues Arg715–Thr718, Leu732–Tyr736, Phe737, Phe744, Leu749–Ser751, and Thr802.

Belongs to the nitrate reductase family. In terms of assembly, homodimer. Requires FAD as cofactor. It depends on heme as a cofactor. The cofactor is Mo-molybdopterin. In terms of tissue distribution, in cortical cells of roots grown at low nitrate concentrations, in vascular tissues of roots at high nitrate concentrations and in root apex under both conditions.

The catalysed reaction is nitrite + NAD(+) + H2O = nitrate + NADH + H(+). Its function is as follows. Nitrate reductase is a key enzyme involved in the first step of nitrate assimilation in plants, fungi and bacteria. The protein is Nitrate reductase [NADH] (NIA) of Cichorium intybus (Chicory).